The chain runs to 127 residues: Large ribosomal subunit protein uL22 (127 aa).

The protein belongs to the universal ribosomal protein uL22 family. Part of the 50S ribosomal subunit.

This protein binds specifically to 23S rRNA; its binding is stimulated by other ribosomal proteins, e.g. L4, L17, and L20. It is important during the early stages of 50S assembly. It makes multiple contacts with different domains of the 23S rRNA in the assembled 50S subunit and ribosome. Functionally, the globular domain of the protein is located near the polypeptide exit tunnel on the outside of the subunit, while an extended beta-hairpin is found that lines the wall of the exit tunnel in the center of the 70S ribosome. This chain is Large ribosomal subunit protein uL22, found in Brucella suis (strain ATCC 23445 / NCTC 10510).